We begin with the raw amino-acid sequence, 482 residues long: MSELIFEKSVKGHKFAEAKLTVPEYKLDSKYLRASDAKLPEVSELEFVRHYMELSKRTHGVDNGFYPLGSCTMKYNPKLNEEVADLPNFTNIHPLQPEHTMKGCIEAMGDLGKKLGEITGMDAFSLQPSAGAHGEFTALLVIRAYHEKRGDHARNKILVPDSAHGTNPASAAMVGCEIVNIPSDKDGNVDIEELKKTVGNDTAALMLTNPNTLGLFETHIKEIAEIVHKAGGLLYYDGANLNAIMGRLRPGDMGYDIVHLNLHKTFSTPHGGGGPGSGPIGCKKFLEEFLPVPVVTGSDGSYKLDYNRPDSIGRVRNFYGNFLVFLRAYAYILTLGSEGIRESSGYAVLNANYLKKKLEKEYDVAFDRICMHEFVLTLEKIKEETGVSALDIAKGLIDDGIHPPTMYFPLIVHEALMFEPTETESKSTLDFTAEVMIKLKKEAYSNPEKLHGYPYTRPIGRVDETKAAREPVLRYKACCCCK.

At Lys264 the chain carries N6-(pyridoxal phosphate)lysine.

It belongs to the GcvP family. C-terminal subunit subfamily. The glycine cleavage system is composed of four proteins: P, T, L and H. In this organism, the P 'protein' is a heterodimer of two subunits. Requires pyridoxal 5'-phosphate as cofactor.

It catalyses the reaction N(6)-[(R)-lipoyl]-L-lysyl-[glycine-cleavage complex H protein] + glycine + H(+) = N(6)-[(R)-S(8)-aminomethyldihydrolipoyl]-L-lysyl-[glycine-cleavage complex H protein] + CO2. Functionally, the glycine cleavage system catalyzes the degradation of glycine. The P protein binds the alpha-amino group of glycine through its pyridoxal phosphate cofactor; CO(2) is released and the remaining methylamine moiety is then transferred to the lipoamide cofactor of the H protein. The chain is Probable glycine dehydrogenase (decarboxylating) subunit 2 from Treponema denticola (strain ATCC 35405 / DSM 14222 / CIP 103919 / JCM 8153 / KCTC 15104).